The primary structure comprises 446 residues: Argininosuccinate lyase (446 aa).

Belongs to the lyase 1 family. Argininosuccinate lyase subfamily.

It is found in the cytoplasm. The enzyme catalyses 2-(N(omega)-L-arginino)succinate = fumarate + L-arginine. It functions in the pathway amino-acid biosynthesis; L-arginine biosynthesis; L-arginine from L-ornithine and carbamoyl phosphate: step 3/3. This Sulfurisphaera tokodaii (strain DSM 16993 / JCM 10545 / NBRC 100140 / 7) (Sulfolobus tokodaii) protein is Argininosuccinate lyase.